The primary structure comprises 687 residues: DNA ligase (687 aa).

Residues 33 to 37 (DAEFD), 83 to 84 (SL), and E113 contribute to the NAD(+) site. Residue K115 is the N6-AMP-lysine intermediate of the active site. NAD(+) is bound by residues R136, E176, K292, and K316. Positions 410, 413, 429, and 435 each coordinate Zn(2+). Positions 599-687 (SVPRTLAGVT…GPPAEVGEPT (89 aa)) constitute a BRCT domain.

It belongs to the NAD-dependent DNA ligase family. LigA subfamily. It depends on Mg(2+) as a cofactor. Requires Mn(2+) as cofactor.

The catalysed reaction is NAD(+) + (deoxyribonucleotide)n-3'-hydroxyl + 5'-phospho-(deoxyribonucleotide)m = (deoxyribonucleotide)n+m + AMP + beta-nicotinamide D-nucleotide.. DNA ligase that catalyzes the formation of phosphodiester linkages between 5'-phosphoryl and 3'-hydroxyl groups in double-stranded DNA using NAD as a coenzyme and as the energy source for the reaction. It is essential for DNA replication and repair of damaged DNA. The protein is DNA ligase of Mycobacterium marinum (strain ATCC BAA-535 / M).